Here is a 380-residue protein sequence, read N- to C-terminus: MAGVLRVALVAGEASGDILGASLMQALKAVRPDIEFIGVGGPRMQAEGLQSYFPMERLAVMGLFEVLGRLPELLLRRRWLIRDLLEARPDLYIGIDAPDFNLGIELRLRRAGIRTVHYVSPSVWAWRQKRVLKIRQACDLMLTLFPFEAEFYEARNVPVRFVGHPLADQIPLQTDRDAARAALDLTDGETIVALLPGSRGGELARLGPLFIEAAERLLALHAGPLRFVVPCASPERRRQLEEMLSHTRRDLPVMLLDGRSHEALAACDAVLIASGTATLEALLYKRPMVVAYRLAPLTYKVARHLVKTPFFSLPNLLAGRALVPELLQDRATPEALAEALIPLLEIGGEQTECFDAIHRSLRRDASRRAAESVLELAERA.

The protein belongs to the LpxB family.

It catalyses the reaction a lipid X + a UDP-2-N,3-O-bis[(3R)-3-hydroxyacyl]-alpha-D-glucosamine = a lipid A disaccharide + UDP + H(+). The protein operates within bacterial outer membrane biogenesis; LPS lipid A biosynthesis. In terms of biological role, condensation of UDP-2,3-diacylglucosamine and 2,3-diacylglucosamine-1-phosphate to form lipid A disaccharide, a precursor of lipid A, a phosphorylated glycolipid that anchors the lipopolysaccharide to the outer membrane of the cell. In Azotobacter vinelandii (strain DJ / ATCC BAA-1303), this protein is Lipid-A-disaccharide synthase.